The primary structure comprises 192 residues: uncharacterized protein (192 aa).

The Nudix hydrolase domain maps to 29–160 (QRQAAVLIPV…PLDVYRRGNS (132 aa)). Residues 67–89 (GAVDSTDASLIAAALREAQEEVA) carry the Nudix box motif. 2 residues coordinate Mg(2+): Glu83 and Glu87.

The protein belongs to the Nudix hydrolase family. PCD1 subfamily. Mn(2+) serves as cofactor. Mg(2+) is required as a cofactor.

Its function is as follows. Probably mediates the hydrolysis of some nucleoside diphosphate derivatives. This is an uncharacterized protein from Salmonella agona (strain SL483).